We begin with the raw amino-acid sequence, 339 residues long: tRNA N6-adenosine threonylcarbamoyltransferase (339 aa).

Positions 111 and 115 each coordinate Fe cation. Residues 134 to 138, D167, G180, and N272 contribute to the substrate site; that span reads LVSGG. D300 lines the Fe cation pocket.

The protein belongs to the KAE1 / TsaD family. It depends on Fe(2+) as a cofactor.

The protein localises to the cytoplasm. It catalyses the reaction L-threonylcarbamoyladenylate + adenosine(37) in tRNA = N(6)-L-threonylcarbamoyladenosine(37) in tRNA + AMP + H(+). Required for the formation of a threonylcarbamoyl group on adenosine at position 37 (t(6)A37) in tRNAs that read codons beginning with adenine. Is involved in the transfer of the threonylcarbamoyl moiety of threonylcarbamoyl-AMP (TC-AMP) to the N6 group of A37, together with TsaE and TsaB. TsaD likely plays a direct catalytic role in this reaction. The polypeptide is tRNA N6-adenosine threonylcarbamoyltransferase (Vibrio cholerae serotype O1 (strain ATCC 39541 / Classical Ogawa 395 / O395)).